A 156-amino-acid polypeptide reads, in one-letter code: ATP synthase subunit b (156 aa).

Residues 12–32 (VAFLIFVLFCMKYVWPPVITA) traverse the membrane as a helical segment.

This sequence belongs to the ATPase B chain family. As to quaternary structure, F-type ATPases have 2 components, F(1) - the catalytic core - and F(0) - the membrane proton channel. F(1) has five subunits: alpha(3), beta(3), gamma(1), delta(1), epsilon(1). F(0) has three main subunits: a(1), b(2) and c(10-14). The alpha and beta chains form an alternating ring which encloses part of the gamma chain. F(1) is attached to F(0) by a central stalk formed by the gamma and epsilon chains, while a peripheral stalk is formed by the delta and b chains.

It localises to the cell inner membrane. In terms of biological role, f(1)F(0) ATP synthase produces ATP from ADP in the presence of a proton or sodium gradient. F-type ATPases consist of two structural domains, F(1) containing the extramembraneous catalytic core and F(0) containing the membrane proton channel, linked together by a central stalk and a peripheral stalk. During catalysis, ATP synthesis in the catalytic domain of F(1) is coupled via a rotary mechanism of the central stalk subunits to proton translocation. Functionally, component of the F(0) channel, it forms part of the peripheral stalk, linking F(1) to F(0). The polypeptide is ATP synthase subunit b (Pseudomonas putida (strain ATCC 700007 / DSM 6899 / JCM 31910 / BCRC 17059 / LMG 24140 / F1)).